The primary structure comprises 465 residues: GTPase Der (465 aa).

EngA-type G domains follow at residues 3–167 (PLVA…PEEG) and 179–352 (IRIA…ESAN). Residues 9–16 (GRPNVGKS), 57–61 (DTGGI), 119–122 (NKID), 185–192 (GRPNVGKS), 232–236 (DTAGL), and 297–300 (NKWD) each bind GTP. Residues 353–437 (KTFTTSEVNK…PVSFIFREGT (85 aa)) enclose the KH-like domain.

The protein belongs to the TRAFAC class TrmE-Era-EngA-EngB-Septin-like GTPase superfamily. EngA (Der) GTPase family. As to quaternary structure, associates with the 50S ribosomal subunit.

In terms of biological role, GTPase that plays an essential role in the late steps of ribosome biogenesis. The sequence is that of GTPase Der from Stenotrophomonas maltophilia (strain R551-3).